A 143-amino-acid chain; its full sequence is MIVQVINGPNLGRLGRREPDVYGDTTHDQLAALIEAEAAALGLKAIVRQSDSEAELLDWIHGAADANQPVILNAGGLTHTSVALRDACAELSAPLIEVHISNVHAREEFRRHSYLSPVATGAIVGLGVQGYLLALRYLAGRPA.

Catalysis depends on Y22, which acts as the Proton acceptor. 3 residues coordinate substrate: N73, H79, and D86. The active-site Proton donor is the H99. Substrate-binding positions include 100-101 (IS) and R110.

The protein belongs to the type-II 3-dehydroquinase family. Homododecamer.

It catalyses the reaction 3-dehydroquinate = 3-dehydroshikimate + H2O. Its pathway is metabolic intermediate biosynthesis; chorismate biosynthesis; chorismate from D-erythrose 4-phosphate and phosphoenolpyruvate: step 3/7. In terms of biological role, catalyzes a trans-dehydration via an enolate intermediate. The polypeptide is 3-dehydroquinate dehydratase (Mycolicibacterium paratuberculosis (strain ATCC BAA-968 / K-10) (Mycobacterium paratuberculosis)).